We begin with the raw amino-acid sequence, 1447 residues long: ATP-dependent helicase SGS1 (1447 aa).

Disordered stretches follow at residues isoleucine 37–lysine 78, lysine 243–asparagine 264, lysine 342–glutamate 430, lysine 552–serine 572, and threonine 601–aspartate 639. Residues glycine 59–lysine 78 are compositionally biased toward polar residues. The segment covering lysine 243–lysine 253 has biased composition (basic and acidic residues). Residues glycine 254–asparagine 264 are compositionally biased toward polar residues. Residues glutamate 363–proline 386 are compositionally biased toward basic and acidic residues. 2 stretches are compositionally biased toward acidic residues: residues glutamate 403–aspartate 415 and lysine 552–asparagine 561. A compositionally biased stretch (basic and acidic residues) spans threonine 601–histidine 611. The Helicase ATP-binding domain occupies valine 687 to valine 864. Alanine 714–threonine 721 provides a ligand contact to ATP. Positions aspartate 808–histidine 811 match the DEAH box motif. The region spanning threonine 886 to glutamine 1035 is the Helicase C-terminal domain. Positions leucine 1272–glutamate 1351 constitute an HRDC domain. The segment covering glutamine 1402–asparagine 1411 has biased composition (polar residues). The disordered stretch occupies residues glutamine 1402 to lysine 1447. Low complexity predominate over residues threonine 1412 to lysine 1424. Positions serine 1425–lysine 1447 are enriched in basic residues.

It belongs to the helicase family. RecQ subfamily. As to quaternary structure, heterodimer with TOP3. Forms a complex with TOP3 and RMI1. Forms a ternary complex with a MLH1-MLH3 heterodimer (MutLbeta) during meiosis. Interacts with TOP2. Mg(2+) is required as a cofactor.

Its subcellular location is the nucleus. The protein localises to the nucleolus. The enzyme catalyses Couples ATP hydrolysis with the unwinding of duplex DNA by translocating in the 3'-5' direction.. It carries out the reaction ATP + H2O = ADP + phosphate + H(+). With respect to regulation, helicase activity on G-quadruplex DNA is inhibited by ATP-gamma-S. Its function is as follows. ATP-dependent 3'-5' DNA helicase able to unwind duplex DNA or DNA:RNA heteroduplex. Unwinds G-quadruplex DNA; unwinding occurs in the 3'-5' direction, requires a 3' single-stranded end of at least 7 nucleotides. Helicase activity is higher on G-quadruplex substrates than on duplex DNA substrates. Assayed with a catalytic fragment (residues 400-1268). Telomeres and rDNA are notably G-rich; formation of G-quadruplex DNA would block DNA replication and transcription. Acts as an integral component of the S-phase checkpoint response, which arrests cells due to DNA damage or blocked fork progression during DNA replication. Can create a deleterious topological substrate that TOP3 preferentially resolves. The TOP3-SGS1 protein complex may function as a eukaryotic reverse gyrase introducing positive supercoils into extrachromosomal ribosomal DNA rings. Together with topoisomerase II has a role in chromosomal segregation. Maintains rDNA structure where it has a role in re-starting stalled replication forks. In Saccharomyces cerevisiae (strain ATCC 204508 / S288c) (Baker's yeast), this protein is ATP-dependent helicase SGS1.